Reading from the N-terminus, the 309-residue chain is Aspartate carbamoyltransferase catalytic subunit (309 aa).

The carbamoyl phosphate site is built by R54 and T55. K82 contributes to the L-aspartate binding site. Carbamoyl phosphate is bound by residues R104, H132, and Q135. L-aspartate-binding residues include R165 and R219. 2 residues coordinate carbamoyl phosphate: G260 and P261.

Belongs to the aspartate/ornithine carbamoyltransferase superfamily. ATCase family. In terms of assembly, heterododecamer (2C3:3R2) of six catalytic PyrB chains organized as two trimers (C3), and six regulatory PyrI chains organized as three dimers (R2).

The catalysed reaction is carbamoyl phosphate + L-aspartate = N-carbamoyl-L-aspartate + phosphate + H(+). It functions in the pathway pyrimidine metabolism; UMP biosynthesis via de novo pathway; (S)-dihydroorotate from bicarbonate: step 2/3. Its function is as follows. Catalyzes the condensation of carbamoyl phosphate and aspartate to form carbamoyl aspartate and inorganic phosphate, the committed step in the de novo pyrimidine nucleotide biosynthesis pathway. This Parafrankia sp. (strain EAN1pec) protein is Aspartate carbamoyltransferase catalytic subunit.